The primary structure comprises 512 residues: Na(+)/H(+) antiporter NhaB (512 aa).

The next 11 helical transmembrane spans lie at Phe-28 to Val-48, Ile-52 to Ile-72, Leu-97 to Phe-117, Phe-144 to Ile-164, Leu-201 to Pro-221, Phe-237 to Phe-257, Leu-296 to Ala-330, Thr-347 to Ile-367, Leu-390 to Val-410, Ala-446 to Ile-466, and Val-474 to Phe-494.

This sequence belongs to the NhaB Na(+)/H(+) (TC 2.A.34) antiporter family.

It localises to the cell inner membrane. The catalysed reaction is 2 Na(+)(in) + 3 H(+)(out) = 2 Na(+)(out) + 3 H(+)(in). Functionally, na(+)/H(+) antiporter that extrudes sodium in exchange for external protons. The polypeptide is Na(+)/H(+) antiporter NhaB (Enterobacter sp. (strain 638)).